Here is a 342-residue protein sequence, read N- to C-terminus: Endolytic peptidoglycan transglycosylase RlpA (342 aa).

The signal sequence occupies residues 1–26 (MSKRVRSSLILPAVCGLGLAAVLLSS). A lipid anchor (N-palmitoyl cysteine) is attached at Cys-27. Cys-27 carries S-diacylglycerol cysteine lipidation. Positions 261-342 (SLPADGLYLQ…LGQPTLVRPD (82 aa)) constitute an SPOR domain.

Belongs to the RlpA family.

The protein resides in the cell membrane. Lytic transglycosylase with a strong preference for naked glycan strands that lack stem peptides. The chain is Endolytic peptidoglycan transglycosylase RlpA from Pseudomonas aeruginosa (strain ATCC 15692 / DSM 22644 / CIP 104116 / JCM 14847 / LMG 12228 / 1C / PRS 101 / PAO1).